The chain runs to 412 residues: COP9 signalosome complex subunit 4 (412 aa).

In terms of domain architecture, PCI spans glutamate 216–proline 378.

It belongs to the CSN4 family. Component of the CSN complex, probably composed of csn-1, csn-2, csn-3, csn-4, csn-5, csn-6 and csn-7. Within the complex it probably interacts directly with csn-2 and csn-4. In the complex, it probably interacts directly with csn-1, csn-2, csn-3 and csn-6. Interacts with itself.

It localises to the cytoplasm. The protein localises to the nucleus. Its function is as follows. Component of the COP9 signalosome complex (CSN), a complex involved in various cellular and developmental processes. The CSN complex is an essential regulator of the ubiquitin (Ubl) conjugation pathway by mediating the deneddylation of the cullin subunits of the SCF-type E3 ligase complexes, leading to decrease the Ubl ligase activity of SCF. The CSN complex plays an essential role in embryogenesis and oogenesis and is required to regulate microtubule stability in the early embryo. Mediates mei-3/katanin targeting for degradation at the meiosis to mitosis transition via deneddylation of cul-3. The chain is COP9 signalosome complex subunit 4 (csn-4) from Caenorhabditis elegans.